The sequence spans 1230 residues: Cullin-associated NEDD8-dissociated protein 1 (1230 aa).

A2 carries the N-acetylalanine modification. HEAT repeat units lie at residues 2 to 39 (ASAS…KDSI), 44 to 81 (DSER…KVKE), 83 to 119 (QVET…ELPP), 131 to 165 (CKKI…LSRQ), 171 to 208 (NFHP…SCGN), 210 to 247 (VFVG…QAGH), 248 to 282 (RIGE…FESF), 289 to 366 (EVYP…TRHE), 370 to 407 (EFYK…QTRP), 424 to 467 (PLTM…VLPG), 471 to 510 (QHIP…NHSP), and 515 to 552 (PHVQ…VIRP). An N6-acetyllysine modification is found at K55. The segment at 315–343 (DEDEDENAMDADGGDDDDQGSDDEYSDDG) is disordered. S335 carries the phosphoserine modification. S558 bears the Phosphoserine mark. 15 HEAT repeats span residues 563–602 (PYIK…NLGD), 606–643 (SDLP…LKID), 646–683 (PVLG…NYSD), 688–725 (AMID…VYPS), 729–768 (KISG…TGTN), 770–808 (LGYM…ALTR), 809–845 (ACPK…LGEV), 852–889 (SGQL…GNLP), 890–927 (EYLP…GLKP), 928–960 (YVEN…KLTL), 961–998 (IDPE…DHPQ), 1002–1039 (PLLK…NKPS), 1043–1097 (DLLD…DSCL), 1099–1133 (RLDI…LSTL), and 1140–1189 (QRLD…IPEA). K971 bears the N6-acetyllysine mark.

Belongs to the CAND family. Interacts with TBP. Part of a complex that contains CUL1 and RBX1. Interacts with unneddylated cullins: interacts with CUL1, CUL2, CUL3, CUL4A, CUL4B and CUL5. Does not bind neddylated CUL1. Interaction with cullins is abolished in presence of COMMD1, which antagonizes with CAND1 for interacting with cullins. Interacts with ERCC6. Interacts with DCUN1D1, DCUN1D2, DCUN1D3, DCUN1D4 and DCUN1D5; these interactions are bridged by cullins and strongly inhibits the neddylation of cullins.

It is found in the cytoplasm. It localises to the nucleus. Key assembly factor of SCF (SKP1-CUL1-F-box protein) E3 ubiquitin ligase complexes that promotes the exchange of the substrate-recognition F-box subunit in SCF complexes, thereby playing a key role in the cellular repertoire of SCF complexes. Acts as a F-box protein exchange factor. The exchange activity of CAND1 is coupled with cycles of neddylation conjugation: in the deneddylated state, cullin-binding CAND1 binds CUL1-RBX1, increasing dissociation of the SCF complex and promoting exchange of the F-box protein. Probably plays a similar role in other cullin-RING E3 ubiquitin ligase complexes. This chain is Cullin-associated NEDD8-dissociated protein 1 (CAND1), found in Pongo abelii (Sumatran orangutan).